A 326-amino-acid chain; its full sequence is Aspartate carbamoyltransferase catalytic subunit (326 aa).

Carbamoyl phosphate is bound by residues R55 and T56. Residue K83 participates in L-aspartate binding. Carbamoyl phosphate contacts are provided by R105, H135, and Q138. L-aspartate contacts are provided by R176 and R230. The carbamoyl phosphate site is built by G271 and P272.

It belongs to the aspartate/ornithine carbamoyltransferase superfamily. ATCase family. Heterododecamer (2C3:3R2) of six catalytic PyrB chains organized as two trimers (C3), and six regulatory PyrI chains organized as three dimers (R2).

It carries out the reaction carbamoyl phosphate + L-aspartate = N-carbamoyl-L-aspartate + phosphate + H(+). Its pathway is pyrimidine metabolism; UMP biosynthesis via de novo pathway; (S)-dihydroorotate from bicarbonate: step 2/3. Its function is as follows. Catalyzes the condensation of carbamoyl phosphate and aspartate to form carbamoyl aspartate and inorganic phosphate, the committed step in the de novo pyrimidine nucleotide biosynthesis pathway. This chain is Aspartate carbamoyltransferase catalytic subunit, found in Streptomyces coelicolor (strain ATCC BAA-471 / A3(2) / M145).